A 95-amino-acid polypeptide reads, in one-letter code: Acylphosphatase (95 aa).

An Acylphosphatase-like domain is found at 5-93 (RAHLYIKGKV…GEFQDFRILP (89 aa)). Residues Arg-20 and Asn-38 contribute to the active site.

Belongs to the acylphosphatase family.

The catalysed reaction is an acyl phosphate + H2O = a carboxylate + phosphate + H(+). The sequence is that of Acylphosphatase (acyP) from Pyrobaculum islandicum (strain DSM 4184 / JCM 9189 / GEO3).